The following is a 217-amino-acid chain: Translation initiation factor 6 (217 aa).

The protein belongs to the eIF-6 family.

Binds to the 50S ribosomal subunit and prevents its association with the 30S ribosomal subunit to form the 70S initiation complex. This is Translation initiation factor 6 from Methanococcoides burtonii (strain DSM 6242 / NBRC 107633 / OCM 468 / ACE-M).